Reading from the N-terminus, the 471-residue chain is MEGDDGDFPPEPSEHSLSQRGSVASSVTRAQDLLVYLANDSAVHLTLEGLGCMNAQELGRSVREALNIPNSAADVFAFWFCSPLLELQLKPKHLPYKLCRQWQDLLYRFTEAPTEDISLDEPSLLFKRSVFYPRAKELQIEDEGVLRLLYDEAKMNILEGRYPCDPEHWLTLGALSCAIELGTELDDQALTAAIREKKLSSFLPAHAALGGGGFLSTLRGRGGRNAEMEQNLVKECRSVCSSAASGSSQEPIALLRQYLRSCHNLPYYGCAFFAGEIDKPAQGLLHRGGRKAVSVGISLEGVYVMDVKEKHVLLGLKFTELSWDHSYPETEGDSHILWLEFDGEEAGTPVNKLLKIYSKQAELMSGLIEFCVELRSVSESAATGTDGEVTPSHEPTSPETNNKTRERRQGKLRRQNSVVCSRVHSLSTINYVDDGKEIKRLKPKRAASFFTRQAQPPTYSAVQVTESLEQG.

Disordered stretches follow at residues 1-23 (MEGDDGDFPPEPSEHSLSQRGSV), 381-416 (AATGTDGEVTPSHEPTSPETNNKTRERRQGKLRRQN), and 451-471 (TRQAQPPTYSAVQVTESLEQG). One can recognise an FERM domain in the interval 31–382 (QDLLVYLAND…ELRSVSESAA (352 aa)).

It is found in the cytoplasm. It localises to the cytosol. The protein resides in the cell membrane. Promotes the cell surface stability of rhomboid 5 homologs and prevents their degradation via the endolysosomal pathway. By acting on rhomboid 5 homologs, involved in ADAM17-mediated ligand shedding. Negatively regulates the Wnt/beta-catenin signaling pathway. The protein is FERM domain-containing protein 8 (frmd8) of Danio rerio (Zebrafish).